Consider the following 272-residue polypeptide: Imidazole glycerol phosphate synthase subunit HisF (272 aa).

Residues aspartate 11 and aspartate 130 contribute to the active site.

This sequence belongs to the HisA/HisF family. As to quaternary structure, heterodimer of HisH and HisF.

It is found in the cytoplasm. It catalyses the reaction 5-[(5-phospho-1-deoxy-D-ribulos-1-ylimino)methylamino]-1-(5-phospho-beta-D-ribosyl)imidazole-4-carboxamide + L-glutamine = D-erythro-1-(imidazol-4-yl)glycerol 3-phosphate + 5-amino-1-(5-phospho-beta-D-ribosyl)imidazole-4-carboxamide + L-glutamate + H(+). It participates in amino-acid biosynthesis; L-histidine biosynthesis; L-histidine from 5-phospho-alpha-D-ribose 1-diphosphate: step 5/9. Functionally, IGPS catalyzes the conversion of PRFAR and glutamine to IGP, AICAR and glutamate. The HisF subunit catalyzes the cyclization activity that produces IGP and AICAR from PRFAR using the ammonia provided by the HisH subunit. This is Imidazole glycerol phosphate synthase subunit HisF from Methanococcus maripaludis (strain C6 / ATCC BAA-1332).